The following is a 357-amino-acid chain: Alanine racemase (357 aa).

K35 (proton acceptor; specific for D-alanine) is an active-site residue. At K35 the chain carries N6-(pyridoxal phosphate)lysine. R130 serves as a coordination point for substrate. The active-site Proton acceptor; specific for L-alanine is Y253. M302 contacts substrate.

This sequence belongs to the alanine racemase family. The cofactor is pyridoxal 5'-phosphate.

The catalysed reaction is L-alanine = D-alanine. It participates in amino-acid biosynthesis; D-alanine biosynthesis; D-alanine from L-alanine: step 1/1. Catalyzes the interconversion of L-alanine and D-alanine. May also act on other amino acids. In Wigglesworthia glossinidia brevipalpis, this protein is Alanine racemase (alr).